Reading from the N-terminus, the 514-residue chain is Beta-secretase 2 (514 aa).

The first 19 residues, 1–19 (MGALLRALLLLVLAQWLLS), serve as a signal peptide directing secretion. Positions 20–62 (AVPALAPAPFTLPLQVAGATNHRASAVPGLGTPELPRADGLAL) are excised as a propeptide. The Extracellular segment spans residues 20–469 (AVPALAPAPF…NEPILWIVSY (450 aa)). Residues 88 to 425 (YYLEMLIGTP…DRAQRRVGFA (338 aa)) enclose the Peptidase A1 domain. D106 is an active-site residue. The N-linked (GlcNAc...) asparagine glycan is linked to N166. Intrachain disulfides connect C229–C429, C288–C453, and C340–C389. The active site involves D299. N362 is a glycosylation site (N-linked (GlcNAc...) asparagine). A helical membrane pass occupies residues 470–490 (ALMSVCGAILLVLILLLLLPL). Over 491–514 (HCRHAPRDPEVVNDESSLVRHRWK) the chain is Cytoplasmic.

The protein belongs to the peptidase A1 family. As to quaternary structure, monomer. Interacts with RTN3 and RTN4. Post-translationally, undergoes autoproteolytic cleavage. In terms of processing, glycosylated. High expression in pancreatic islets. Expressed at much lower levels in the pituitary, colon, and ovaries and is nearly absent from all the other tissues.

It localises to the cell membrane. Its subcellular location is the golgi apparatus. It is found in the endoplasmic reticulum. The protein localises to the endosome. The protein resides in the melanosome. It catalyses the reaction Broad endopeptidase specificity. Cleaves Glu-Val-Asn-Leu-|-Asp-Ala-Glu-Phe in the Swedish variant of Alzheimer's amyloid precursor protein.. Its function is as follows. Responsible for the proteolytic processing of the amyloid precursor protein (APP). Cleaves APP, between residues 690 and 691, leading to the generation and extracellular release of beta-cleaved soluble APP, and a corresponding cell-associated C-terminal fragment which is later released by gamma-secretase. It has also been shown that it can cleave APP between residues 671 and 672. Involved in the proteolytic shedding of PMEL at early stages of melanosome biogenesis. Cleaves PMEL within the M-beta fragment to release the amyloidogenic PMEL luminal fragment containing M-alpha and a small portion of M-beta N-terminus. This is a prerequisite step for subsequent processing and assembly of PMEL fibrils into amyloid sheets. Responsible also for the proteolytic processing of CLTRN in pancreatic beta cells. The protein is Beta-secretase 2 (Bace2) of Mus musculus (Mouse).